We begin with the raw amino-acid sequence, 374 residues long: MIFDEDSSSVAQESGYMGVGSPYSSDVGRISMSDHWNKLTKPSSIKVVNHGNALNKADLIIEPLESGFALTLGNALRRVMMSSLRGFAVYGVEIENVLHEFTSISGVREDVTDILLNISMIRLKLSGMDNKVLSLKVKGPCEVRSGMIADTPDCTILNKDLLICTLDQDVDFNIKMYVNSGKGYVPAVKRKSINKFGLSDVPVNFIATNALYSPIKKASFRVESSRIGQFTDYDRLIMSVETDHSILPDEAVALAARILQDQFQQFINFDETDEPHQKVDTKDVLPYDSNLLRKVDELELSVRSYNCLKNDNITYIGDLVQKTESDMLRTPNFGRKSLNEINELLASMNLHLGMKIANWPPESIESLSKQYSEE.

Residues 1–270 (MIFDEDSSSV…DQFQQFINFD (270 aa)) are alpha N-terminal domain (alpha-NTD). The alpha C-terminal domain (alpha-CTD) stretch occupies residues 282-374 (KDVLPYDSNL…ESLSKQYSEE (93 aa)).

This sequence belongs to the RNA polymerase alpha chain family. Homodimer. The RNAP catalytic core consists of 2 alpha, 1 beta, 1 beta' and 1 omega subunit. When a sigma factor is associated with the core the holoenzyme is formed, which can initiate transcription.

It carries out the reaction RNA(n) + a ribonucleoside 5'-triphosphate = RNA(n+1) + diphosphate. Its function is as follows. DNA-dependent RNA polymerase catalyzes the transcription of DNA into RNA using the four ribonucleoside triphosphates as substrates. The polypeptide is DNA-directed RNA polymerase subunit alpha (Ehrlichia ruminantium (strain Gardel)).